We begin with the raw amino-acid sequence, 280 residues long: Dolichyl-diphosphooligosaccharide--protein glycosyltransferase subunit 2 (280 aa).

The signal sequence occupies residues 1–16 (MKLLLVLLTIASVALA). The Lumenal segment spans residues 17–187 (AVDDVAVNNF…FRQPEKRPSA (171 aa)). A helical membrane pass occupies residues 188–208 (LISDLFTIICLSPLLILVVLW). The Cytoplasmic portion of the chain corresponds to 209–222 (SQVGINFQNAPASP). Residues 223–243 (WVPIFHVGLIGIFGIYFMFWV) traverse the membrane as a helical segment. Q244 is a topological domain (lumenal). A helical transmembrane segment spans residues 245–265 (FDMFVTLKYLAVLGFLTFVAG). The Cytoplasmic portion of the chain corresponds to 266–280 (NRVLRAISESKQKSE).

This sequence belongs to the SWP1 family. As to quaternary structure, component of the oligosaccharyltransferase (OST) complex.

It localises to the endoplasmic reticulum membrane. The protein operates within protein modification; protein glycosylation. Its function is as follows. Subunit of the oligosaccharyl transferase (OST) complex that catalyzes the initial transfer of a defined glycan (Glc(3)Man(9)GlcNAc(2) in eukaryotes) from the lipid carrier dolichol-pyrophosphate to an asparagine residue within an Asn-X-Ser/Thr consensus motif in nascent polypeptide chains, the first step in protein N-glycosylation. N-glycosylation occurs cotranslationally and the complex associates with the Sec61 complex at the channel-forming translocon complex that mediates protein translocation across the endoplasmic reticulum (ER). All subunits are required for a maximal enzyme activity. The chain is Dolichyl-diphosphooligosaccharide--protein glycosyltransferase subunit 2 from Caenorhabditis elegans.